Reading from the N-terminus, the 25-residue chain is Dermaseptin-5.1TR (25 aa).

V25 carries the valine amide modification.

As to expression, expressed by the skin glands.

The protein resides in the secreted. In terms of biological role, has antimicrobial activity. In Phyllomedusa trinitatis (Trinidad leaf frog), this protein is Dermaseptin-5.1TR.